The primary structure comprises 109 residues: Sperm-specific class P protein 10 (109 aa).

Positions 2–109 (SLTADPPACT…TVTIPMSATA (108 aa)) constitute an MSP domain.

As to expression, expressed at higher level in testis.

The sequence is that of Sperm-specific class P protein 10 (ssp-10) from Caenorhabditis elegans.